We begin with the raw amino-acid sequence, 343 residues long: Mediator of RNA polymerase II transcription subunit 2 (343 aa).

Disordered regions lie at residues 105–141 (KQQQ…AQQL) and 252–277 (STNE…ISSN). Positions 107–132 (QQEEEQRRKHQAELEKNKRQQEHDAA) are enriched in basic and acidic residues. A compositionally biased stretch (polar residues) spans 252 to 264 (STNEASTNNRNND).

This sequence belongs to the Mediator complex subunit 2 family. As to quaternary structure, component of the Mediator complex.

It is found in the nucleus. Component of the Mediator complex, a coactivator involved in the regulated transcription of nearly all RNA polymerase II-dependent genes. Mediator functions as a bridge to convey information from gene-specific regulatory proteins to the basal RNA polymerase II transcription machinery. Mediator is recruited to promoters by direct interactions with regulatory proteins and serves as a scaffold for the assembly of a functional preinitiation complex with RNA polymerase II and the general transcription factors. This chain is Mediator of RNA polymerase II transcription subunit 2 (MED2), found in Eremothecium gossypii (strain ATCC 10895 / CBS 109.51 / FGSC 9923 / NRRL Y-1056) (Yeast).